The following is a 166-amino-acid chain: Cyclic pyranopterin monophosphate synthase (166 aa).

Substrate contacts are provided by residues 75 to 77 (LCH) and 113 to 114 (ME). D128 is a catalytic residue.

It belongs to the MoaC family. In terms of assembly, homohexamer; trimer of dimers.

The catalysed reaction is (8S)-3',8-cyclo-7,8-dihydroguanosine 5'-triphosphate = cyclic pyranopterin phosphate + diphosphate. It participates in cofactor biosynthesis; molybdopterin biosynthesis. Catalyzes the conversion of (8S)-3',8-cyclo-7,8-dihydroguanosine 5'-triphosphate to cyclic pyranopterin monophosphate (cPMP). This chain is Cyclic pyranopterin monophosphate synthase, found in Thermomicrobium roseum (strain ATCC 27502 / DSM 5159 / P-2).